A 184-amino-acid chain; its full sequence is Guanylate kinase (184 aa).

The Guanylate kinase-like domain occupies 5 to 183 (KKLIILTGPS…TAKRIIKLIQ (179 aa)). 12–19 (GPSGVGKG) contributes to the ATP binding site.

This sequence belongs to the guanylate kinase family.

The protein resides in the cytoplasm. It catalyses the reaction GMP + ATP = GDP + ADP. In terms of biological role, essential for recycling GMP and indirectly, cGMP. The protein is Guanylate kinase of Prochlorococcus marinus (strain MIT 9312).